We begin with the raw amino-acid sequence, 217 residues long: T-complex protein 10A homolog 1 (217 aa).

Residues 1 to 26 (MLAGQLEARDPKEGTHPEDPCPGAGA) are disordered. The segment covering 7 to 19 (EARDPKEGTHPED) has biased composition (basic and acidic residues). Residues 69 to 110 (ADVHGKLRSHIDALREQNMELREKLRALQLQRWKARKKSAAS) adopt a coiled-coil conformation. Residues 75–96 (LRSHIDALREQNMELREKLRAL) are leucine-zipper. The span at 175-192 (ERISSWKTPPQEKRDKSL) shows a compositional bias: basic and acidic residues. The tract at residues 175-217 (ERISSWKTPPQEKRDKSLSRRRQDRRATPTGRPTPCAERRGGV) is disordered.

Belongs to the TCP10 family. As to quaternary structure, self-associates (via leucine zipper). Interacts (via leucine zipper) with ZIPK/DAPK3 (via leucine zipper). Interacts with MAD4.

It localises to the nucleus. May be involved in transcriptional regulation. Has in vitro transcription inhibition activity. This Pan troglodytes (Chimpanzee) protein is T-complex protein 10A homolog 1 (TCP10L).